A 359-amino-acid chain; its full sequence is MNIYDQLQAVEDRYEELGELLSDPDVVSDTKRFMELSREEANTRETVTAYREYKQVIQTISDAEEMIKDASGDPELEEMAKEELKESKAAKEEYEEKLKILLLPKDPNDDKNIILEIRGAAGGDEAALFAGDLLTMYQKYAETQGWRFEVMESSVNGVGGIKEVVAMVSGQSVYSKLKYESGAHRVQRVPVTESQGRVHTSTATVLVMPEVEEVEYDIDQKDLRVDIYHASGAGGQNVNKVATAVRMVHIPTGIKVEMQEERTQQKNRDKAMKIIRARVADHFAQIAQDEQDAERKSTVGTGDRSERIRTYNFPQNRVTDHRIGLTLQKLDIILSGKMDEVIDALVMYDQTKKLESLNN.

An N5-methylglutamine modification is found at Q236.

It belongs to the prokaryotic/mitochondrial release factor family. In terms of processing, methylated by PrmC. Methylation increases the termination efficiency of RF1.

The protein localises to the cytoplasm. Peptide chain release factor 1 directs the termination of translation in response to the peptide chain termination codons UAG and UAA. In Streptococcus pyogenes serotype M18 (strain MGAS8232), this protein is Peptide chain release factor 1.